The chain runs to 79 residues: Sec-independent protein translocase protein TatA (79 aa).

A helical membrane pass occupies residues 1-21; it reads MFSGISIWQLLILLAIVVLLF. 2 stretches are compositionally biased toward basic and acidic residues: residues 44 to 58 and 66 to 79; these read MKDG…RLAD and QDAE…KDKA. The disordered stretch occupies residues 44 to 79; that stretch reads MKDGEDEQDHKRLADDDQPQNKQDAEQKAEQEKDKA.

This sequence belongs to the TatA/E family. The Tat system comprises two distinct complexes: a TatABC complex, containing multiple copies of TatA, TatB and TatC subunits, and a separate TatA complex, containing only TatA subunits. Substrates initially bind to the TatABC complex, which probably triggers association of the separate TatA complex to form the active translocon.

Its subcellular location is the cell inner membrane. Its function is as follows. Part of the twin-arginine translocation (Tat) system that transports large folded proteins containing a characteristic twin-arginine motif in their signal peptide across membranes. TatA could form the protein-conducting channel of the Tat system. The chain is Sec-independent protein translocase protein TatA from Alcanivorax borkumensis (strain ATCC 700651 / DSM 11573 / NCIMB 13689 / SK2).